Consider the following 325-residue polypeptide: Beta-ketoacyl-[acyl-carrier-protein] synthase III (325 aa).

Residues cysteine 119 and histidine 252 contribute to the active site. Positions 253-257 (QANIR) are ACP-binding. Asparagine 282 is an active-site residue.

This sequence belongs to the thiolase-like superfamily. FabH family. Homodimer.

The protein localises to the cytoplasm. It catalyses the reaction malonyl-[ACP] + acetyl-CoA + H(+) = 3-oxobutanoyl-[ACP] + CO2 + CoA. It participates in lipid metabolism; fatty acid biosynthesis. In terms of biological role, catalyzes the condensation reaction of fatty acid synthesis by the addition to an acyl acceptor of two carbons from malonyl-ACP. Catalyzes the first condensation reaction which initiates fatty acid synthesis and may therefore play a role in governing the total rate of fatty acid production. Possesses both acetoacetyl-ACP synthase and acetyl transacylase activities. Its substrate specificity determines the biosynthesis of branched-chain and/or straight-chain of fatty acids. The polypeptide is Beta-ketoacyl-[acyl-carrier-protein] synthase III (Delftia acidovorans (strain DSM 14801 / SPH-1)).